The sequence spans 1013 residues: Poly [ADP-ribose] polymerase 1 (1013 aa).

A2 carries the post-translational modification N-acetylalanine. The PARP-type 1 zinc-finger motif lies at 9-93 (YRVEYAKSGR…KVKKTAEAGG (85 aa)). 2 residues coordinate Zn(2+): C21 and C24. S41 carries the phosphoserine modification. H53 and C56 together coordinate Zn(2+). K97 and K105 each carry N6-acetyllysine. The PARP-type 2 zinc finger occupies 113–203 (FAAEYAKSNR…VLKKQLPGVK (91 aa)). Zn(2+)-binding residues include C125 and C128. At K131 the chain carries N6-acetyllysine. The Zn(2+) site is built by H159 and C162. Phosphoserine is present on residues S177, S179, and S185. Residue K192 forms a Glycyl lysine isopeptide (Lys-Gly) (interchain with G-Cter in SUMO2) linkage. The tract at residues 198 to 233 (QLPGVKSEGKRKGDEVDGADEVAKKKSKKGKDKDSK) is disordered. K203 participates in a covalent cross-link: Glycyl lysine isopeptide (Lys-Gly) (interchain with G-Cter in SUMO1); alternate. A Glycyl lysine isopeptide (Lys-Gly) (interchain with G-Cter in SUMO2); alternate cross-link involves residue K203. Short sequence motifs (nuclear localization signal) lie at residues 207-209 (KRK) and 221-226 (KKKSKK). One can recognise a PADR1 zinc-binding domain in the interval 225–359 (KKGKDKDSKL…VKKQDRIFPP (135 aa)). A Glycyl lysine isopeptide (Lys-Gly) (interchain with G-Cter in SUMO2) cross-link involves residue K249. Phosphoserine is present on residues S274 and S277. The zinc ribbon stretch occupies residues 290–332 (GALLPCKECSGQLVFKSDAYYCTGDVTAWTKCMVKTQTPSRKE). Zn(2+)-binding residues include C295, C298, C311, and C321. Residues 357–383 (FPPETSAPAPPHLPPSVTSAPTAVNSS) are disordered. A compositionally biased stretch (polar residues) spans 372 to 383 (SVTSAPTAVNSS). Residues 373–523 (VTSAPTAVNS…GVNKSEKRMK (151 aa)) form an automodification domain region. Residues 385-476 (PADKPLSNMK…KSLQELLSAH (92 aa)) enclose the BRCT domain. D387 bears the PolyADP-ribosyl aspartic acid mark. Residues E407, E413, E435, E437, E444, E445, and E456 each carry the polyADP-ribosyl glutamic acid modification. K467 participates in a covalent cross-link: Glycyl lysine isopeptide (Lys-Gly) (interchain with G-Cter in SUMO2). PolyADP-ribosyl glutamic acid is present on residues E471 and E484. K486 participates in a covalent cross-link: Glycyl lysine isopeptide (Lys-Gly) (interchain with G-Cter in SUMO1); alternate. A Glycyl lysine isopeptide (Lys-Gly) (interchain with G-Cter in SUMO2); alternate cross-link involves residue K486. PolyADP-ribosyl glutamic acid occurs at positions 488 and 491. Residues 495 to 516 (PKGKSAAPSKKSKGLYKEEGVN) are disordered. S499, S503, and S506 each carry ADP-ribosylserine. K511 is covalently cross-linked (Glycyl lysine isopeptide (Lys-Gly) (interchain with G-Cter in SUMO2)). 2 positions are modified to polyADP-ribosyl glutamic acid: E512 and E513. The residue at position 518 (S518) is an ADP-ribosylserine. Residue E519 is modified to PolyADP-ribosyl glutamic acid. An N6-(ADP-ribosyl)lysine modification is found at K520. K527 is covalently cross-linked (Glycyl lysine isopeptide (Lys-Gly) (interchain with G-Cter in SUMO2)). In terms of domain architecture, WGR spans 541–637 (SAHVLEKGGK…KNFTKYPKKF (97 aa)). T593 carries the post-translational modification Phosphothreonine. N6-acetyllysine occurs at positions 599 and 620. In terms of domain architecture, PARP alpha-helical spans 661–778 (KSKLPKAVQE…DIEVAYSLLR (118 aa)). A Glycyl lysine isopeptide (Lys-Gly) (interchain with G-Cter in SUMO1); alternate cross-link involves residue K747. K747 is covalently cross-linked (Glycyl lysine isopeptide (Lys-Gly) (interchain with G-Cter in SUMO2); alternate). Residues S781 and S785 each carry the phosphoserine modification. The region spanning 787 to 1013 (DPIDVNYEKL…LKFNFKTSLW (227 aa)) is the PARP catalytic domain. Residues 861 to 863 (HGS), G870, R877, and S903 contribute to the NAD(+) site. E987 acts as the For poly [ADP-ribose] polymerase activity in catalysis.

The protein belongs to the ARTD/PARP family. In terms of assembly, homodimer; PARP-type zinc-fingers from separate PARP1 molecules form a dimer module that specifically recognizes DNA strand breaks. Heterodimer; heterodimerizes with PARP2. Interacts (via the PARP catalytic domain) with HPF1. Interacts with NMNAT1. Interacts with nucleosomes; with a preference for nucleosomes containing H2A.X. Interacts with APTX. Component of a base excision repair (BER) complex, containing at least XRCC1, PARP1, PARP2, POLB and LRIG3. Interacts with SRY. The SWAP complex consists of NPM1, NCL, PARP1 and SWAP70. Interacts with TIAM2. Interacts with PARP3; leading to activate PARP1 in absence of DNA. Interacts (when poly-ADP-ribosylated) with CHD1L (via macro domain). Interacts with the DNA polymerase alpha catalytic subunit POLA1; this interaction functions as part of the control of replication fork progression. Interacts with EEF1A1 and TXK. Interacts with RNF4. Interacts with RNF146. Interacts with ZNF423. Interacts with APLF. Interacts with SNAI1 (via zinc fingers); the interaction requires SNAI1 to be poly-ADP-ribosylated and non-phosphorylated (active) by GSK3B. Interacts (when poly-ADP-ribosylated) with PARP9. Interacts with NR4A3; activates PARP1 by improving acetylation of PARP1 and suppressing the interaction between PARP1 and SIRT1. Interacts (via catalytic domain) with PUM3; the interaction inhibits the poly-ADP-ribosylation activity of PARP1 and the degradation of PARP1 by CASP3 following genotoxic stress. Interacts with ZNF365. Interacts with RRP1B. Interacts with TIMELESS; the interaction is direct. Interacts with CGAS; leading to impede the formation of the PARP1-TIMELESS complex. Interacts with KHDC3L, the interaction is increased following the formation of DNA double-strand breaks. Interacts (when auto-poly-ADP-ribosylated) with XRCC1; leading to inhibit PARP1 ADP-ribosyltransferase activity. Interacts with SPINDOC; promoting PARP1 ADP-ribosyltransferase activity. Interacts with BANF1; leading to inhibit PARP1 ADP-ribosyltransferase activity in response to oxidative DNA damage. Interacts (when sumoylated and ubiquitinated) with VCP/p97; leading to its extraction from chromatin. Interacts with YARS1; promoting PARP1 ADP-ribosyltransferase activity. Interacts with PACMP micropeptide; Interacts with PACMP micropeptide; interaction. Interacts (when poly-ADP-ribosylated) with isoform 1 of MACROH2A1; MACROH2A1 specifically binds to poly-ADP-ribose chains and inhibits PARP1 activity, limiting the consumption of nuclear NAD(+). Interacts with CARM1; promoting recruitment to replication forks. Interacts with RECQL. Interacts with ZNF32; the interaction reshapes ZNF432 interacting proteins. Interacts with TPRN; TPRN interacts with a number of DNA damage response proteins, is recruited to sites of DNA damage and may play a role in DNA damage repair. Interacts (when auto-poly-ADP-ribosylated) with AIFM1. Poly-ADP-ribosylated on serine, glutamate and aspartate residues by autocatalysis. Auto-ADP-ribosylation on serine takes place following interaction with HPF1. Auto poly-ADP-ribosylation on serine residues promotes its dissociation from chromatin. Poly-ADP-ribosylated by PARP2; poly-ADP-ribosylation mediates the recruitment of CHD1L to DNA damage sites. Mono-ADP-ribosylated at Lys-520 by SIRT6 in response to oxidative stress, promoting recruitment to double-strand breaks (DSBs) sites. In terms of processing, S-nitrosylated, leading to inhibit transcription regulation activity. Post-translationally, phosphorylated at Thr-593 by PRKDC in response to DNA damage following virus infection, promoting its translocation to the cytosol. Phosphorylated by TXK. Proteolytically cleaved by caspase-3 (CASP3) and caspase-7 (CASP7) in response to apoptosis to generate the Poly [ADP-ribose] polymerase 1, processed N-terminus and Poly [ADP-ribose] polymerase 1, processed C-terminus forms. In terms of processing, sumoylated with SUMO1 or SUMO2 by PIAS4 following prolonged residence (trapping) to chromatin. Sumoylation promotes ubiquitination by RNF4 and removal from chromatin by VCP/p97. Post-translationally, ubiquitinated by RNF4 following sumoylation by PIAS4 in response to prolonged residence (trapping) to chromatin. Ubiquitination promotes removal from chromatin by VCP/p97.

The protein resides in the chromosome. It localises to the nucleus. Its subcellular location is the nucleolus. The protein localises to the cytoplasm. It is found in the cytosol. It catalyses the reaction NAD(+) + (ADP-D-ribosyl)n-acceptor = nicotinamide + (ADP-D-ribosyl)n+1-acceptor + H(+).. The enzyme catalyses L-seryl-[protein] + NAD(+) = O-(ADP-D-ribosyl)-L-seryl-[protein] + nicotinamide + H(+). It carries out the reaction L-aspartyl-[protein] + NAD(+) = 4-O-(ADP-D-ribosyl)-L-aspartyl-[protein] + nicotinamide. The catalysed reaction is L-glutamyl-[protein] + NAD(+) = 5-O-(ADP-D-ribosyl)-L-glutamyl-[protein] + nicotinamide. It catalyses the reaction L-tyrosyl-[protein] + NAD(+) = O-(ADP-D-ribosyl)-L-tyrosyl-[protein] + nicotinamide + H(+). The enzyme catalyses L-histidyl-[protein] + NAD(+) = N(tele)-(ADP-D-ribosyl)-L-histidyl-[protein] + nicotinamide + H(+). With respect to regulation, ADP-ribosyltransferase activity is regulated via an allosteric activation mechanism. In absence of activation signal, PARP1 is autoinhibited by the PARP alpha-helical domain (also named HD region), which prevents effective NAD(+)-binding. Activity is highly stimulated by signals, such as DNA strand breaks. Binding to damaged DNA unfolds the PARP alpha-helical domain, relieving autoinhibition. Poly-ADP-ribosyltransferase activity is tightly regulated and PARP1 is removed from damaged chromatin following initial poly-ADP-ribosylation of chromatin to avoid prolonged residence (trapping) that has cytotoxic consequences. A number of factors (VCP/p97) or post-translational modifications (auto-poly-ADP-ribosylation or ubiquitination) promote PARP1 removal from chromatin. Its function is as follows. Poly-ADP-ribosyltransferase that mediates poly-ADP-ribosylation of proteins and plays a key role in DNA repair. Mediates glutamate, aspartate, serine, histidine or tyrosine ADP-ribosylation of proteins: the ADP-D-ribosyl group of NAD(+) is transferred to the acceptor carboxyl group of target residues and further ADP-ribosyl groups are transferred to the 2'-position of the terminal adenosine moiety, building up a polymer with an average chain length of 20-30 units. Serine ADP-ribosylation of proteins constitutes the primary form of ADP-ribosylation of proteins in response to DNA damage. Specificity for the different amino acids is conferred by interacting factors, such as HPF1 and NMNAT1. Following interaction with HPF1, catalyzes serine ADP-ribosylation of target proteins; HPF1 confers serine specificity by completing the PARP1 active site. Also catalyzes tyrosine ADP-ribosylation of target proteins following interaction with HPF1. Following interaction with NMNAT1, catalyzes glutamate and aspartate ADP-ribosylation of target proteins; NMNAT1 confers glutamate and aspartate specificity. PARP1 initiates the repair of DNA breaks: recognizes and binds DNA breaks within chromatin and recruits HPF1, licensing serine ADP-ribosylation of target proteins, such as histones (H2BS6ADPr and H3S10ADPr), thereby promoting decompaction of chromatin and the recruitment of repair factors leading to the reparation of DNA strand breaks. HPF1 initiates serine ADP-ribosylation but restricts the polymerase activity of PARP1 in order to limit the length of poly-ADP-ribose chains. In addition to base excision repair (BER) pathway, also involved in double-strand breaks (DSBs) repair: together with TIMELESS, accumulates at DNA damage sites and promotes homologous recombination repair by mediating poly-ADP-ribosylation. Mediates the poly-ADP-ribosylation of a number of proteins, including itself, APLF, CHFR and NFAT5. In addition to proteins, also able to ADP-ribosylate DNA: catalyzes ADP-ribosylation of DNA strand break termini containing terminal phosphates and a 2'-OH group in single- and double-stranded DNA, respectively. Required for PARP9 and DTX3L recruitment to DNA damage sites. PARP1-dependent PARP9-DTX3L-mediated ubiquitination promotes the rapid and specific recruitment of 53BP1/TP53BP1, UIMC1/RAP80, and BRCA1 to DNA damage sites. PARP1-mediated DNA repair in neurons plays a role in sleep: senses DNA damage in neurons and promotes sleep, facilitating efficient DNA repair. In addition to DNA repair, also involved in other processes, such as transcription regulation, programmed cell death, membrane repair, adipogenesis and innate immunity. Acts as a repressor of transcription: binds to nucleosomes and modulates chromatin structure in a manner similar to histone H1, thereby altering RNA polymerase II. Acts both as a positive and negative regulator of transcription elongation, depending on the context. Acts as a positive regulator of transcription elongation by mediating poly-ADP-ribosylation of NELFE, preventing RNA-binding activity of NELFE and relieving transcription pausing. Acts as a negative regulator of transcription elongation in response to DNA damage by catalyzing poly-ADP-ribosylation of CCNT1, disrupting the phase separation activity of CCNT1 and subsequent activation of CDK9. Involved in replication fork progression following interaction with CARM1: mediates poly-ADP-ribosylation at replication forks, slowing fork progression. Poly-ADP-ribose chains generated by PARP1 also play a role in poly-ADP-ribose-dependent cell death, a process named parthanatos. Also acts as a negative regulator of the cGAS-STING pathway. Acts by mediating poly-ADP-ribosylation of CGAS: PARP1 translocates into the cytosol following phosphorylation by PRKDC and catalyzes poly-ADP-ribosylation and inactivation of CGAS. Acts as a negative regulator of adipogenesis: catalyzes poly-ADP-ribosylation of histone H2B on 'Glu-35' (H2BE35ADPr) following interaction with NMNAT1, inhibiting phosphorylation of H2B at 'Ser-36' (H2BS36ph), thereby blocking expression of pro-adipogenetic genes. Involved in the synthesis of ATP in the nucleus, together with NMNAT1, PARG and NUDT5. Nuclear ATP generation is required for extensive chromatin remodeling events that are energy-consuming. In terms of biological role, promotes AIFM1-mediated apoptosis. This form, which translocates into the cytoplasm following cleavage by caspase-3 (CASP3) and caspase-7 (CASP7) in response to apoptosis, is auto-poly-ADP-ribosylated and serves as a poly-ADP-ribose carrier to induce AIFM1-mediated apoptosis. Functionally, this cleavage form irreversibly binds to DNA breaks and interferes with DNA repair, promoting DNA damage-induced apoptosis. This is Poly [ADP-ribose] polymerase 1 (PARP1) from Cricetulus griseus (Chinese hamster).